A 182-amino-acid polypeptide reads, in one-letter code: MDDVRGALLQQIKDKAVVHGKVTLSSGLEADYYVDLRRITLDGEAAPLVGQVLLDLTADLDFDAVGGLTMGADPVAAAMLHAAAARGRRLDAFVVRKAAKAHGLQRRVEGPEIKGRRVLVVEDTSTTGGSPLTAVEAVREAGAEVVGVATIVDRATGAAEKIEAGAGVPYRFAYDKDELGLD.

5-phospho-alpha-D-ribose 1-diphosphate is bound by residues Arg96, Lys97, Lys100, His102, and 122–130; that span reads EDTSTTGGS. 2 residues coordinate orotate: Thr126 and Arg154.

Belongs to the purine/pyrimidine phosphoribosyltransferase family. PyrE subfamily. As to quaternary structure, homodimer. The cofactor is Mg(2+).

The enzyme catalyses orotidine 5'-phosphate + diphosphate = orotate + 5-phospho-alpha-D-ribose 1-diphosphate. It functions in the pathway pyrimidine metabolism; UMP biosynthesis via de novo pathway; UMP from orotate: step 1/2. Catalyzes the transfer of a ribosyl phosphate group from 5-phosphoribose 1-diphosphate to orotate, leading to the formation of orotidine monophosphate (OMP). The chain is Orotate phosphoribosyltransferase from Streptomyces avermitilis (strain ATCC 31267 / DSM 46492 / JCM 5070 / NBRC 14893 / NCIMB 12804 / NRRL 8165 / MA-4680).